The following is a 396-amino-acid chain: MGTMIRHTFTHRCGALLCALALGSSTMAATAAAKPKKGQMQKLRQRPVWAPTGGRYASLDGAFTALANDASFFEANPAGSANMTHGELAFFHTTGFGSFHAETLSYVGQSGNWGYGASMRMFFPESGFDFSTTTEPVCTPASNPIKQRGAIGIINFARRIGGLSLGANLKAGFRDAQGLQHTSVSSDIGLQWVGNVAKSFTSEEPNLYIGLAATNLGLTVKVSDKIENCTSTCEKCGCCKERCCCNGKKACCKDCDCNCPCQDCNDKGTVHATDTMLRAGFAYRPFSWFLFSLGATTSMNVQTLASSDAKSLYQNLAYSIGAMFDPFSFLSLSSSFRINHKANMRVGVGAEARIARIKLNAGYRCDVSDISSGSGCTGAKASHYLSLGGAILLGRN.

The signal sequence occupies residues 1 to 28; the sequence is MGTMIRHTFTHRCGALLCALALGSSTMA.

The protein belongs to the UPF0164 family.

The chain is UPF0164 protein TP_0858 from Treponema pallidum (strain Nichols).